The following is a 370-amino-acid chain: tRNA 2-selenouridine synthase (370 aa).

A Rhodanese domain is found at 12-136 (FLDDVPMMDM…MRTFLLETTQ (125 aa)). Cys95 functions as the S-selanylcysteine intermediate in the catalytic mechanism.

The protein belongs to the SelU family. In terms of assembly, monomer.

The enzyme catalyses 5-methylaminomethyl-2-thiouridine(34) in tRNA + selenophosphate + (2E)-geranyl diphosphate + H2O + H(+) = 5-methylaminomethyl-2-selenouridine(34) in tRNA + (2E)-thiogeraniol + phosphate + diphosphate. It catalyses the reaction 5-methylaminomethyl-2-thiouridine(34) in tRNA + (2E)-geranyl diphosphate = 5-methylaminomethyl-S-(2E)-geranyl-thiouridine(34) in tRNA + diphosphate. The catalysed reaction is 5-methylaminomethyl-S-(2E)-geranyl-thiouridine(34) in tRNA + selenophosphate + H(+) = 5-methylaminomethyl-2-(Se-phospho)selenouridine(34) in tRNA + (2E)-thiogeraniol. It carries out the reaction 5-methylaminomethyl-2-(Se-phospho)selenouridine(34) in tRNA + H2O = 5-methylaminomethyl-2-selenouridine(34) in tRNA + phosphate. Functionally, involved in the post-transcriptional modification of the uridine at the wobble position (U34) of tRNA(Lys), tRNA(Glu) and tRNA(Gln). Catalyzes the conversion of 2-thiouridine (S2U-RNA) to 2-selenouridine (Se2U-RNA). Acts in a two-step process involving geranylation of 2-thiouridine (S2U) to S-geranyl-2-thiouridine (geS2U) and subsequent selenation of the latter derivative to 2-selenouridine (Se2U) in the tRNA chain. In Pseudomonas putida (strain ATCC 47054 / DSM 6125 / CFBP 8728 / NCIMB 11950 / KT2440), this protein is tRNA 2-selenouridine synthase.